The chain runs to 305 residues: Superkiller complex protein 8 (305 aa).

Methionine 1 carries the N-acetylmethionine modification. Threonine 2 carries the post-translational modification N-acetylthreonine; in WD repeat-containing protein 61, N-terminally processed. 7 WD repeats span residues 14–57 (AHDD…LELQ), 62–101 (GHQL…QMKS), 104–143 (AGPV…KEYS), 146–187 (TRGK…HTLE), 188–227 (GHAM…LAGT), 230–269 (GHAS…CIHT), and 272–305 (DHQD…DCPI).

This sequence belongs to the SKI8 family. As to quaternary structure, component of the PAF1 complex, which consists of CDC73, PAF1, LEO1, CTR9, RTF1 and SKIC8. The PAF1 complex interacts with PHF5A. Within the PAF1 complex interacts directly with PHF5A. Component of the SKI complex which consists of SKIC2, SKIC3 and SKIC8.

It is found in the nucleus. Its subcellular location is the cytoplasm. Its function is as follows. Component of the PAF1 complex (PAF1C) which has multiple functions during transcription by RNA polymerase II and is implicated in regulation of development and maintenance of embryonic stem cell pluripotency. PAF1C associates with RNA polymerase II through interaction with POLR2A CTD non-phosphorylated and 'Ser-2'- and 'Ser-5'-phosphorylated forms and is involved in transcriptional elongation, acting both independently and synergistically with TCEA1 and in cooperation with the DSIF complex and HTATSF1. PAF1C is required for transcription of Hox and Wnt target genes. PAF1C is involved in hematopoiesis and stimulates transcriptional activity of KMT2A/MLL1; it promotes leukemogenesis through association with KMT2A/MLL1-rearranged oncoproteins, such as KMT2A/MLL1-MLLT3/AF9 and KMT2A/MLL1-MLLT1/ENL. PAF1C is involved in histone modifications such as ubiquitination of histone H2B and methylation on histone H3 'Lys-4' (H3K4me3). PAF1C recruits the RNF20/40 E3 ubiquitin-protein ligase complex and the E2 enzyme UBE2A or UBE2B to chromatin which mediate monoubiquitination of 'Lys-120' of histone H2B (H2BK120ub1); UB2A/B-mediated H2B ubiquitination is proposed to be coupled to transcription. PAF1C is involved in mRNA 3' end formation probably through association with cleavage and poly(A) factors. In case of infection by influenza A strain H3N2, PAF1C associates with viral NS1 protein, thereby regulating gene transcription. Required for mono- and trimethylation on histone H3 'Lys-4' (H3K4me3), dimethylation on histone H3 'Lys-79' (H3K4me3). Required for Hox gene transcription. Also acts as a component of the SKI complex, a multiprotein complex that assists the RNA-degrading exosome during the mRNA decay and quality-control pathways. The SKI complex catalyzes mRNA extraction from 80S ribosomal complexes in the 3'-5' direction and channels mRNA to the cytosolic exosome for degradation. SKI-mediated extraction of mRNA from stalled ribosomes allow binding of the Pelota-HBS1L complex and subsequent ribosome disassembly by ABCE1 for ribosome recycling. The chain is Superkiller complex protein 8 (Skic8) from Rattus norvegicus (Rat).